Here is a 487-residue protein sequence, read N- to C-terminus: uncharacterized protein (487 aa).

Positions 1–31 (MRFHRQGISAIIGVLLIVLLGFCWKLSGSYG) are cleaved as a signal peptide. 8 N-linked (GlcNAc...) asparagine glycosylation sites follow: asparagine 40, asparagine 68, asparagine 150, asparagine 220, asparagine 304, asparagine 367, asparagine 442, and asparagine 448. The segment at 141-176 (LERRHGRFGNGTNGDHPKGPPPPPPPPDEKGRGSQK) is disordered.

In terms of processing, N-glycosylated.

This is an uncharacterized protein from Saccharomyces cerevisiae (strain ATCC 204508 / S288c) (Baker's yeast).